A 147-amino-acid chain; its full sequence is Formiminotransferase N-terminal subdomain-containing protein (147 aa).

A signal peptide spans 1-20 (MSSSRVGLRLAACLLNVSEA).

Belongs to the formiminotransferase family. In terms of tissue distribution, widely expressed with highest levels in liver and skeletal muscle, and moderate levels in kidney, bone and pancreas.

This is Formiminotransferase N-terminal subdomain-containing protein (FTCDNL1) from Homo sapiens (Human).